The primary structure comprises 271 residues: Type II restriction enzyme ScrFI (271 aa).

The enzyme catalyses Endonucleolytic cleavage of DNA to give specific double-stranded fragments with terminal 5'-phosphates.. A P subtype restriction enzyme that recognizes the double-stranded sequence 5'-CCNGG-3' and cleaves after C-2. The sequence is that of Type II restriction enzyme ScrFI from Lactococcus lactis subsp. cremoris (Streptococcus cremoris).